We begin with the raw amino-acid sequence, 94 residues long: Putative pterin-4-alpha-carbinolamine dehydratase (94 aa).

The protein belongs to the pterin-4-alpha-carbinolamine dehydratase family.

The enzyme catalyses (4aS,6R)-4a-hydroxy-L-erythro-5,6,7,8-tetrahydrobiopterin = (6R)-L-erythro-6,7-dihydrobiopterin + H2O. The chain is Putative pterin-4-alpha-carbinolamine dehydratase from Mycolicibacterium smegmatis (strain ATCC 700084 / mc(2)155) (Mycobacterium smegmatis).